Reading from the N-terminus, the 128-residue chain is Gastrotropin (128 aa).

Residue Ala-2 is modified to N-acetylalanine.

The protein belongs to the calycin superfamily. Fatty-acid binding protein (FABP) family. As to expression, expressed in ileum.

It is found in the cytoplasm. The protein resides in the membrane. Binds to bile acids and is involved in enterohepatic bile acid metabolism. Required for efficient apical to basolateral transport of conjugated bile acids in ileal enterocytes. Stimulates gastric acid and pepsinogen secretion. The protein is Gastrotropin (FABP6) of Oryctolagus cuniculus (Rabbit).